Consider the following 306-residue polypeptide: MWKRWLALALVAVAWVRAEEELRSKSKICANVFCGAGRECAVTEKGEPTCLCIEQCKPHKRPVCGSNGKTYLNHCELHRDACLTGSKIQVDYDGHCKEKKSVSPSASPVVCYQSNRDELRRRIIQWLEAEIIPDGWFSRGSNYSEILDKYFKNFDNGDSRLDSSEFLKFVEQNETAINITTYPDQENNKLLRGLCVDALIELSDENADWKLSFQEFLKCLNPSFNPPEKKCALEDETYADGAETEVDCNRCVCACGNWVCTAMTCDGKNQKGAQTQTEEEMTRYVQELQKHQETAEKTKRVSTKEI.

An N-terminal signal peptide occupies residues Met1 to Ala18. The Follistatin-like domain maps to Ile28 to Leu51. Cystine bridges form between Cys29-Cys40, Cys34-Cys50, Cys52-Cys82, Cys56-Cys75, and Cys64-Cys96. One can recognise a Kazal-like domain in the interval Gly46–Glu98. N-linked (GlcNAc...) asparagine glycosylation occurs at Asn142. One can recognise an EF-hand 1 domain in the interval Asn142–Ala176. At Ser163 the chain carries Phosphoserine. N-linked (GlcNAc...) asparagine glycans are attached at residues Asn173 and Asn178. Positions Leu191–Pro226 constitute an EF-hand 2 domain. In terms of domain architecture, VWFC spans Cys231–Val285.

In terms of assembly, homodimer. Interacts with SCN10A. Interacts with DIP2A; DIP2A may act as a cell surface receptor for FSTL1. Interacts with BMP4. Interacts with CD14; this interaction promotes TL4-mediated signaling cascade.

The protein localises to the secreted. Its function is as follows. Secreted glycoprotein that is involved in various physiological processes, such as angiogenesis, regulation of the immune response, cell proliferation and differentiation. Plays a role in the development of the central nervous system, skeletal system, lungs, and ureter. Promotes endothelial cell survival, migration and differentiation into network structures in an AKT-dependent manner. Also promotes survival of cardiac myocytes. Initiates various signaling cascades by activating different receptors on the cell surface such as DIP2A, TLR4 or BMP receptors. This is Follistatin-related protein 1 (FSTL1) from Pongo abelii (Sumatran orangutan).